The sequence spans 195 residues: Cysteine/O-acetylserine efflux protein (195 aa).

Residues 1 to 7 lie on the Periplasmic side of the membrane; sequence MTPTLLS. Residues 8 to 28 form a helical membrane-spanning segment; sequence AFWTYTLITAMTPGPNNILAL. Over 29 to 46 the chain is Cytoplasmic; it reads SSATSHGFRQSTRVLAGM. Residues 47–67 traverse the membrane as a helical segment; the sequence is SLGFLIVMLLCAGISFSLAVI. Over 68–69 the chain is Periplasmic; sequence DP. The helical transmembrane segment at 70–90 threads the bilayer; it reads AAVHLLSWAGAAYIVWLAWKI. The Cytoplasmic portion of the chain corresponds to 91–104; the sequence is ATSPTKEDGLQAKP. A helical membrane pass occupies residues 105–125; the sequence is ISFWASFALQFVNVKIILYGV. Residues 126–141 are Periplasmic-facing; sequence TALSTFVLPQTQALSW. Residues 142 to 162 form a helical membrane-spanning segment; sequence VVGVSVLLAMIGTFGNVCWAL. At 163–176 the chain is on the cytoplasmic side; the sequence is AGHLFQRLFRQYGR. Residues 177-194 form a helical membrane-spanning segment; it reads QLNIVLALLLIYCAVRIF. Position 195 (tyrosine 195) is a topological domain, periplasmic.

The protein belongs to the Rht family.

It is found in the cell inner membrane. The catalysed reaction is O-acetyl-L-serine(in) = O-acetyl-L-serine(out). It catalyses the reaction L-cysteine(in) = L-cysteine(out). Exporter of O-acetylserine (OAS) and cysteine. This is Cysteine/O-acetylserine efflux protein (eamB) from Escherichia coli O139:H28 (strain E24377A / ETEC).